The chain runs to 248 residues: Tabserin (248 aa).

The signal sequence occupies residues 1-19; that stretch reads MLKYSALFLYLIYVGGSES. In terms of domain architecture, Peptidase S1 spans 24–248; it reads IVGGVPVAEE…PYFENGLRKR (225 aa). A disulfide bridge connects residues Cys49 and Cys65. Residues His64 and Asp111 each act as charge relay system in the active site. Disulfide bonds link Cys175–Cys189 and Cys201–Cys226. Residue Ser205 is the Charge relay system of the active site.

This sequence belongs to the peptidase S1 family. In terms of tissue distribution, expressed in salivary glands.

It is found in the secreted. Serine protease that inhibits blood coagulation in a dose-dependent manner. May act by destroying coagulant factors to inhibit blood coagulation. This Tabanus yao (Horsefly) protein is Tabserin.